The chain runs to 409 residues: Tyrosine--tRNA ligase (409 aa).

The 'HIGH' region motif lies at 54-63 (PTAPDIHLGH). A 'KMSKS' region motif is present at residues 238-242 (KMSKS). Position 241 (Lys-241) interacts with ATP. The region spanning 347 to 407 (MGILHVLRAS…GKRKFARVNL (61 aa)) is the S4 RNA-binding domain.

The protein belongs to the class-I aminoacyl-tRNA synthetase family. TyrS type 2 subfamily. As to quaternary structure, homodimer.

Its subcellular location is the cytoplasm. It carries out the reaction tRNA(Tyr) + L-tyrosine + ATP = L-tyrosyl-tRNA(Tyr) + AMP + diphosphate + H(+). Its function is as follows. Catalyzes the attachment of tyrosine to tRNA(Tyr) in a two-step reaction: tyrosine is first activated by ATP to form Tyr-AMP and then transferred to the acceptor end of tRNA(Tyr). This is Tyrosine--tRNA ligase from Bordetella avium (strain 197N).